Consider the following 178-residue polypeptide: Leukemia NUP98 fusion partner 1 (178 aa).

3 disordered regions span residues 28-55 (EDQRGLRERHRLQATSHRKTSLPCPLPV), 89-108 (SEDGSFKEPLESKGRSHSKI), and 147-178 (IKSRKKVEEERSSRKEEHGEAHMAPLFEKGPE). The segment covering 34–47 (RERHRLQATSHRKT) has biased composition (basic residues). Positions 147-167 (IKSRKKVEEERSSRKEEHGEA) are enriched in basic and acidic residues.

This chain is Leukemia NUP98 fusion partner 1 (LNP1), found in Homo sapiens (Human).